Reading from the N-terminus, the 230-residue chain is Probable septum site-determining protein MinC (230 aa).

Belongs to the MinC family. In terms of assembly, interacts with MinD and FtsZ.

Cell division inhibitor that blocks the formation of polar Z ring septums. Rapidly oscillates between the poles of the cell to destabilize FtsZ filaments that have formed before they mature into polar Z rings. Prevents FtsZ polymerization. This Erwinia tasmaniensis (strain DSM 17950 / CFBP 7177 / CIP 109463 / NCPPB 4357 / Et1/99) protein is Probable septum site-determining protein MinC.